Reading from the N-terminus, the 935-residue chain is Protocadherin gamma-A11 (935 aa).

Positions 1 to 29 (MANRLQRGDRSRLLLLLCIFLGTLRGFRA) are cleaved as a signal peptide. Cadherin domains are found at residues 30 to 134 (RQIR…APSF), 135 to 243 (QEDE…IPMF), 244 to 348 (TQSV…APEI), 349 to 453 (TITS…PPVF), 454 to 563 (PHSS…APEI), and 571 to 677 (DGST…ADLG). Residues 30-693 (RQIRYSVPEE…NSETSDLSLY (664 aa)) lie on the Extracellular side of the membrane. N-linked (GlcNAc...) asparagine glycosylation occurs at Asn48. N-linked (GlcNAc...) asparagine glycosylation is found at Asn255, Asn266, Asn420, and Asn546. A helical transmembrane segment spans residues 694 to 714 (LVVAVAAVSCIFLVFVIVLLA). Residues 715–935 (LRLWRWHKSR…KKKSGKKEKK (221 aa)) are Cytoplasmic-facing. Disordered regions lie at residues 805-844 (CDPTSNQQAPPNTDWRFSQAQRPGTSGSQNGDDTGTWPNN) and 905-935 (ATLTNAAGKRDGKAPAGGNGNKKKSGKKEKK). A compositionally biased stretch (polar residues) spans 807–844 (PTSNQQAPPNTDWRFSQAQRPGTSGSQNGDDTGTWPNN). The span at 925-935 (NKKKSGKKEKK) shows a compositional bias: basic residues.

The protein localises to the cell membrane. Potential calcium-dependent cell-adhesion protein. May be involved in the establishment and maintenance of specific neuronal connections in the brain. This Homo sapiens (Human) protein is Protocadherin gamma-A11 (PCDHGA11).